Here is a 271-residue protein sequence, read N- to C-terminus: Small ribosomal subunit protein uS2 (271 aa).

The disordered stretch occupies residues 235–271 (FDAKNPLKPQNYNAPNKRPYQDSPRKPSYQNQNQNQI). The segment covering 262 to 271 (SYQNQNQNQI) has biased composition (polar residues).

This sequence belongs to the universal ribosomal protein uS2 family.

The chain is Small ribosomal subunit protein uS2 from Onion yellows phytoplasma (strain OY-M).